We begin with the raw amino-acid sequence, 77 residues long: Sec-independent protein translocase protein TatA (77 aa).

The helical transmembrane segment at 1–21 (MGSFSIWHWLVVLAIVVLVFG) threads the bilayer. A disordered region spans residues 40-77 (KEGMKGAEEENTQPPPSHQQVTGHSIKSEIEEKDQTKV). Positions 65–77 (IKSEIEEKDQTKV) are enriched in basic and acidic residues.

The protein belongs to the TatA/E family. As to quaternary structure, the Tat system comprises two distinct complexes: a TatABC complex, containing multiple copies of TatA, TatB and TatC subunits, and a separate TatA complex, containing only TatA subunits. Substrates initially bind to the TatABC complex, which probably triggers association of the separate TatA complex to form the active translocon.

It localises to the cell inner membrane. Functionally, part of the twin-arginine translocation (Tat) system that transports large folded proteins containing a characteristic twin-arginine motif in their signal peptide across membranes. TatA could form the protein-conducting channel of the Tat system. The protein is Sec-independent protein translocase protein TatA of Nitrosomonas eutropha (strain DSM 101675 / C91 / Nm57).